The primary structure comprises 219 residues: Small ribosomal subunit protein uS2m (219 aa).

This sequence belongs to the universal ribosomal protein uS2 family. Component of the mitochondrial ribosome small subunit.

It localises to the mitochondrion. In Arabidopsis thaliana (Mouse-ear cress), this protein is Small ribosomal subunit protein uS2m (RPS2).